Consider the following 139-residue polypeptide: Endoribonuclease YbeY (139 aa).

The Zn(2+) site is built by His107, His111, and Asp117.

The protein belongs to the endoribonuclease YbeY family. Requires Zn(2+) as cofactor.

It is found in the cytoplasm. Single strand-specific metallo-endoribonuclease involved in late-stage 70S ribosome quality control and in maturation of the 3' terminus of the 16S rRNA. This Bacteroides fragilis (strain ATCC 25285 / DSM 2151 / CCUG 4856 / JCM 11019 / LMG 10263 / NCTC 9343 / Onslow / VPI 2553 / EN-2) protein is Endoribonuclease YbeY.